The following is a 117-amino-acid chain: Large ribosomal subunit protein bL19 (117 aa).

It belongs to the bacterial ribosomal protein bL19 family.

This protein is located at the 30S-50S ribosomal subunit interface and may play a role in the structure and function of the aminoacyl-tRNA binding site. The protein is Large ribosomal subunit protein bL19 of Halorhodospira halophila (strain DSM 244 / SL1) (Ectothiorhodospira halophila (strain DSM 244 / SL1)).